Consider the following 754-residue polypeptide: 1,4-alpha-glucan branching enzyme GlgB (754 aa).

The Nucleophile role is filled by aspartate 431. Glutamate 484 acts as the Proton donor in catalysis.

The protein belongs to the glycosyl hydrolase 13 family. GlgB subfamily. Monomer.

The catalysed reaction is Transfers a segment of a (1-&gt;4)-alpha-D-glucan chain to a primary hydroxy group in a similar glucan chain.. The protein operates within glycan biosynthesis; glycogen biosynthesis. In terms of biological role, catalyzes the formation of the alpha-1,6-glucosidic linkages in glycogen by scission of a 1,4-alpha-linked oligosaccharide from growing alpha-1,4-glucan chains and the subsequent attachment of the oligosaccharide to the alpha-1,6 position. This Prochlorococcus marinus subsp. pastoris (strain CCMP1986 / NIES-2087 / MED4) protein is 1,4-alpha-glucan branching enzyme GlgB.